A 377-amino-acid chain; its full sequence is MKIKSIEPTPSPNTMKVILTEELPAGKSNNYKPEQAEGAPLVIAEILKIDGVKGVYHVADFLAVERNARYDWKDILPQVRTAFGMESAESAEENRSDQESFGEVKVFVQMFSGIPMQVKLTDGEREERFGLPERFQQAILKLRSEASNVVFERAWKEQGVRFGDFDEIGHDVTEELQAAYSDERLKRLTEAAAQGKGEAKQAVQRKAYKVTLDMLDDEDWKKRYAHLEQMDPKEEDIPVLQKALDDPKVSIRRQAVVYLGMIETPDVLPLLYKALEDKAVSVRRTAGDCLSDIGDPQAIPAMIKSLSDSSKLVRWRAAMFLYEVGDESAIEALRAAEDDPEFEVSLQVKMALERIEHGEEAKGSVWKQMTESRKKGE.

This is an uncharacterized protein from Bacillus subtilis (strain 168).